The sequence spans 272 residues: 2-amino-3,7-dideoxy-D-threo-hept-6-ulosonate synthase (272 aa).

Aspartate 33 acts as the Proton acceptor in catalysis. 1-deoxy-D-threo-hexo-2,5-diulose 6-phosphate-binding positions include 33–37 and 153–155; these read DHGVS and YPR. Catalysis depends on tyrosine 153, which acts as the Proton donor. Catalysis depends on lysine 184, which acts as the Schiff-base intermediate with substrate. 1-deoxy-D-threo-hexo-2,5-diulose 6-phosphate is bound by residues 209 to 210 and 237 to 238; these read GG and GR.

The protein belongs to the DeoC/FbaB aldolase family. ADHS subfamily. As to quaternary structure, homodecamer.

It carries out the reaction 1-deoxy-D-threo-hexo-2,5-diulose 6-phosphate + L-aspartate 4-semialdehyde = 2,3-dioxopropyl phosphate + 2-amino-2,3,7-trideoxy-D-lyxo-hept-6-ulosonate. Catalyzes a transaldol reaction between 6-deoxy-5-ketofructose 1-phosphate (DKFP) and L-aspartate semialdehyde (ASA) with an elimination of hydroxypyruvaldehyde phosphate to yield 2-amino-3,7-dideoxy-D-threo-hept-6-ulosonate (ADH). Plays a key role in an alternative pathway of the biosynthesis of 3-dehydroquinate (DHQ), which is involved in the canonical pathway for the biosynthesis of aromatic amino acids. This Methanococcus maripaludis (strain C5 / ATCC BAA-1333) protein is 2-amino-3,7-dideoxy-D-threo-hept-6-ulosonate synthase.